Reading from the N-terminus, the 658-residue chain is Secretin XcpQ (658 aa).

An N-terminal signal peptide occupies residues 1–34 (MSQPLLRALFAPSSRSYVPAVLLSLALGIQAAHA). An N0 region spans residues 51-141 (AHWTINLKDA…TEAGGGQSAP (91 aa)). The tract at residues 142–205 (DRLETRVIQV…DVIRQLDQKG (64 aa)) is N1. Positions 206-279 (SHDYSVINLR…SLDTPTARSA (74 aa)) are N2. The interval 280 to 365 (NTRVIRLRHN…VPRAQVLVEA (86 aa)) is N3. Residues 302–322 (SEGMKNNGGQGGEQTGGGRPS) form a disordered region. Residues 307–320 (NNGGQGGEQTGGGR) show a composition bias toward gly residues. Residues 368 to 606 (VEISGDIQDA…VFLRPTVVRD (239 aa)) are secretin. Residues 608-658 (AGLAALSGKKYSDIRVIDGTRGPEGRPSILPTNANQLFDGQAVDLRELMTE) form a s domain region.

Belongs to the bacterial secretin family. GSP D subfamily. Forms a cylindrical channel with 15 subunits. The closed pentadecameric channel is 170 Angstroms long and 140 Angstroms in diameter.

The protein localises to the cell outer membrane. Functionally, involved in a type II secretion system (T2SS, formerly general secretion pathway, GSP) for the export of proteins. This subunit forms the outer membrane channel. Among its substrates are PrpL, elastase LasB, chitin binding protein D (CbpD), aminopeptidase PaAP, and metalloprotease ImpA. In Pseudomonas aeruginosa (strain ATCC 15692 / DSM 22644 / CIP 104116 / JCM 14847 / LMG 12228 / 1C / PRS 101 / PAO1), this protein is Secretin XcpQ.